Here is a 159-residue protein sequence, read N- to C-terminus: Dihydrofolate reductase (159 aa).

The region spanning 1–158 is the DHFR domain; that stretch reads MISLIAALAV…HSYCFEILER (158 aa). Ile5 contributes to the substrate binding site. Residues Ala7 and 13 to 19 contribute to the NADP(+) site; that span reads VIGMENA. Asp27 is a substrate binding site. 45 to 46 contacts NADP(+); that stretch reads LT. Residues Arg52 and Arg57 each contribute to the substrate site. Residues 63–64, Lys76, and 95–102 each bind NADP(+); these read SS and GGGRVYEQ. Thr113 contributes to the substrate binding site.

Belongs to the dihydrofolate reductase family.

It catalyses the reaction (6S)-5,6,7,8-tetrahydrofolate + NADP(+) = 7,8-dihydrofolate + NADPH + H(+). The protein operates within cofactor biosynthesis; tetrahydrofolate biosynthesis; 5,6,7,8-tetrahydrofolate from 7,8-dihydrofolate: step 1/1. Functionally, key enzyme in folate metabolism. Catalyzes an essential reaction for de novo glycine and purine synthesis, and for DNA precursor synthesis. The protein is Dihydrofolate reductase (folA) of Klebsiella aerogenes (Enterobacter aerogenes).